The following is a 175-amino-acid chain: Alkyl hydroperoxide reductase AhpD (175 aa).

The active-site Proton donor is Cys131. Cys131 and Cys134 are oxidised to a cystine. Cys134 serves as the catalytic Cysteine sulfenic acid (-SOH) intermediate.

This sequence belongs to the AhpD family.

It carries out the reaction N(6)-[(R)-dihydrolipoyl]-L-lysyl-[lipoyl-carrier protein] + a hydroperoxide = N(6)-[(R)-lipoyl]-L-lysyl-[lipoyl-carrier protein] + an alcohol + H2O. In terms of biological role, antioxidant protein with alkyl hydroperoxidase activity. Required for the reduction of the AhpC active site cysteine residues and for the regeneration of the AhpC enzyme activity. The sequence is that of Alkyl hydroperoxide reductase AhpD from Brucella abortus (strain 2308).